The chain runs to 304 residues: Sulfate adenylyltransferase subunit 2 (304 aa).

Belongs to the PAPS reductase family. CysD subfamily. Heterodimer composed of CysD, the smaller subunit, and CysNC.

The enzyme catalyses sulfate + ATP + H(+) = adenosine 5'-phosphosulfate + diphosphate. The protein operates within sulfur metabolism; hydrogen sulfide biosynthesis; sulfite from sulfate: step 1/3. Functionally, with CysN forms the ATP sulfurylase (ATPS) that catalyzes the adenylation of sulfate producing adenosine 5'-phosphosulfate (APS) and diphosphate, the first enzymatic step in sulfur assimilation pathway. APS synthesis involves the formation of a high-energy phosphoric-sulfuric acid anhydride bond driven by GTP hydrolysis by CysN coupled to ATP hydrolysis by CysD. The sequence is that of Sulfate adenylyltransferase subunit 2 from Xylella fastidiosa (strain 9a5c).